Here is a 299-residue protein sequence, read N- to C-terminus: tRNA-cytidine(32) 2-sulfurtransferase (299 aa).

The PP-loop motif motif lies at 49 to 54 (SGGKDS). [4Fe-4S] cluster is bound by residues Cys124, Cys127, and Cys215.

It belongs to the TtcA family. Homodimer. It depends on Mg(2+) as a cofactor. [4Fe-4S] cluster is required as a cofactor.

It is found in the cytoplasm. It catalyses the reaction cytidine(32) in tRNA + S-sulfanyl-L-cysteinyl-[cysteine desulfurase] + AH2 + ATP = 2-thiocytidine(32) in tRNA + L-cysteinyl-[cysteine desulfurase] + A + AMP + diphosphate + H(+). It participates in tRNA modification. Its function is as follows. Catalyzes the ATP-dependent 2-thiolation of cytidine in position 32 of tRNA, to form 2-thiocytidine (s(2)C32). The sulfur atoms are provided by the cysteine/cysteine desulfurase (IscS) system. The protein is tRNA-cytidine(32) 2-sulfurtransferase of Deinococcus radiodurans (strain ATCC 13939 / DSM 20539 / JCM 16871 / CCUG 27074 / LMG 4051 / NBRC 15346 / NCIMB 9279 / VKM B-1422 / R1).